The following is a 226-amino-acid chain: UPF0758 protein SUB0843 (226 aa).

An MPN domain is found at 103–225 (QILSSYQVAK…YYSFREKSDI (123 aa)). Zn(2+) contacts are provided by histidine 174, histidine 176, and aspartate 187. Residues 174-187 (HNHPSGLTNPSEND) carry the JAMM motif motif.

It belongs to the UPF0758 family.

This is UPF0758 protein SUB0843 from Streptococcus uberis (strain ATCC BAA-854 / 0140J).